Here is a 140-residue protein sequence, read N- to C-terminus: ATP synthase epsilon chain (140 aa).

The protein belongs to the ATPase epsilon chain family. In terms of assembly, F-type ATPases have 2 components, CF(1) - the catalytic core - and CF(0) - the membrane proton channel. CF(1) has five subunits: alpha(3), beta(3), gamma(1), delta(1), epsilon(1). CF(0) has three main subunits: a, b and c.

It is found in the cell inner membrane. Its function is as follows. Produces ATP from ADP in the presence of a proton gradient across the membrane. The protein is ATP synthase epsilon chain of Xanthomonas oryzae pv. oryzae (strain MAFF 311018).